The primary structure comprises 497 residues: Probable cytosol aminopeptidase (497 aa).

Lysine 267 and aspartate 272 together coordinate Mn(2+). Lysine 279 is an active-site residue. The Mn(2+) site is built by aspartate 290, aspartate 349, and glutamate 351. The active site involves arginine 353.

Belongs to the peptidase M17 family. It depends on Mn(2+) as a cofactor.

The protein localises to the cytoplasm. The catalysed reaction is Release of an N-terminal amino acid, Xaa-|-Yaa-, in which Xaa is preferably Leu, but may be other amino acids including Pro although not Arg or Lys, and Yaa may be Pro. Amino acid amides and methyl esters are also readily hydrolyzed, but rates on arylamides are exceedingly low.. It carries out the reaction Release of an N-terminal amino acid, preferentially leucine, but not glutamic or aspartic acids.. Functionally, presumably involved in the processing and regular turnover of intracellular proteins. Catalyzes the removal of unsubstituted N-terminal amino acids from various peptides. This Syntrophotalea carbinolica (strain DSM 2380 / NBRC 103641 / GraBd1) (Pelobacter carbinolicus) protein is Probable cytosol aminopeptidase.